Here is a 542-residue protein sequence, read N- to C-terminus: Chaperonin GroEL (542 aa).

ATP-binding positions include 29–32 (TLGP), 86–90 (DGTTT), Gly413, 476–478 (NAA), and Asp492.

Belongs to the chaperonin (HSP60) family. As to quaternary structure, forms a cylinder of 14 subunits composed of two heptameric rings stacked back-to-back. Interacts with the co-chaperonin GroES.

The protein localises to the cytoplasm. It catalyses the reaction ATP + H2O + a folded polypeptide = ADP + phosphate + an unfolded polypeptide.. Together with its co-chaperonin GroES, plays an essential role in assisting protein folding. The GroEL-GroES system forms a nano-cage that allows encapsulation of the non-native substrate proteins and provides a physical environment optimized to promote and accelerate protein folding. The protein is Chaperonin GroEL of Lactococcus lactis subsp. lactis (strain IL1403) (Streptococcus lactis).